The following is a 275-amino-acid chain: Maltoporin (275 aa).

It belongs to the porin LamB (TC 1.B.3) family. As to quaternary structure, homotrimer formed of three 18-stranded antiparallel beta-barrels, containing three independent channels.

The protein localises to the cell outer membrane. The catalysed reaction is beta-maltose(in) = beta-maltose(out). Its function is as follows. Involved in the transport of maltose and maltodextrins. The sequence is that of Maltoporin (lamB) from Vibrio parahaemolyticus.